The chain runs to 63 residues: Large ribosomal subunit protein uL30 (63 aa).

It belongs to the universal ribosomal protein uL30 family. As to quaternary structure, part of the 50S ribosomal subunit.

The chain is Large ribosomal subunit protein uL30 from Xanthomonas axonopodis pv. citri (strain 306).